Reading from the N-terminus, the 309-residue chain is Sporulation sigma-E factor-processing peptidase (309 aa).

5 consecutive transmembrane segments (helical) span residues 7–27, 36–55, 61–78, 88–105, and 130–147; these read VIWLLNFCFDALLLLLTAFIL, LVGGAFIGSSIVLLMFTPFS, PAGKLAFSVVIVVVTFGF, LFSFYFATFLMGGGIIGA, and PISWLFIVGGFPALWFFS. The active site involves Asp183.

It belongs to the peptidase U4 family. As to quaternary structure, self-associates. Interacts with SigE. Interacts with SpoIIR.

It localises to the cell membrane. Functionally, probable aspartic protease that is responsible for the proteolytic cleavage of the RNA polymerase sigma E factor (SigE/spoIIGB) to yield the active peptide in the mother cell during sporulation. Responds to a signal from the forespore that is triggered by the extracellular signal protein SpoIIR. This Bacillus subtilis (strain 168) protein is Sporulation sigma-E factor-processing peptidase (spoIIGA).